Reading from the N-terminus, the 147-residue chain is D-aminoacyl-tRNA deacylase (147 aa).

Positions 136–137 match the Gly-cisPro motif, important for rejection of L-amino acids motif; sequence GP.

This sequence belongs to the DTD family. As to quaternary structure, homodimer.

The protein localises to the cytoplasm. It catalyses the reaction glycyl-tRNA(Ala) + H2O = tRNA(Ala) + glycine + H(+). It carries out the reaction a D-aminoacyl-tRNA + H2O = a tRNA + a D-alpha-amino acid + H(+). In terms of biological role, an aminoacyl-tRNA editing enzyme that deacylates mischarged D-aminoacyl-tRNAs. Also deacylates mischarged glycyl-tRNA(Ala), protecting cells against glycine mischarging by AlaRS. Acts via tRNA-based rather than protein-based catalysis; rejects L-amino acids rather than detecting D-amino acids in the active site. By recycling D-aminoacyl-tRNA to D-amino acids and free tRNA molecules, this enzyme counteracts the toxicity associated with the formation of D-aminoacyl-tRNA entities in vivo and helps enforce protein L-homochirality. In Persephonella marina (strain DSM 14350 / EX-H1), this protein is D-aminoacyl-tRNA deacylase.